Consider the following 177-residue polypeptide: MSSQNQDLVVVGKLGATYGIKGWLKVFSYTEQSESIFAYQPWLIKVKGEWKPIQIESWKKHGQGMVAKLEGLDIREDAQIFTNAEVAVHADQLPALSGEEFYWRELYGMSVVTTEGYDLGKVTDILETGSNDVLVVKANLKDAFGQKERLIPFLDEQVIKSIDRTAQRIEVDWDPGF.

A PRC barrel domain is found at Gly-98–Phe-177.

The protein belongs to the RimM family. Binds ribosomal protein uS19.

The protein localises to the cytoplasm. Its function is as follows. An accessory protein needed during the final step in the assembly of 30S ribosomal subunit, possibly for assembly of the head region. Essential for efficient processing of 16S rRNA. May be needed both before and after RbfA during the maturation of 16S rRNA. It has affinity for free ribosomal 30S subunits but not for 70S ribosomes. The sequence is that of Ribosome maturation factor RimM from Photobacterium profundum (strain SS9).